The sequence spans 264 residues: Thymidylate synthase (264 aa).

R21 is a dUMP binding site. (6R)-5,10-methylene-5,6,7,8-tetrahydrofolate is bound at residue H51. A dUMP-binding site is contributed by R126 to R127. Residue C146 is the Nucleophile of the active site. Residues R166–D169, N177, and H207–Y209 each bind dUMP. D169 contributes to the (6R)-5,10-methylene-5,6,7,8-tetrahydrofolate binding site. Residue A263 participates in (6R)-5,10-methylene-5,6,7,8-tetrahydrofolate binding.

This sequence belongs to the thymidylate synthase family. Bacterial-type ThyA subfamily. Homodimer.

Its subcellular location is the cytoplasm. It catalyses the reaction dUMP + (6R)-5,10-methylene-5,6,7,8-tetrahydrofolate = 7,8-dihydrofolate + dTMP. Its pathway is pyrimidine metabolism; dTTP biosynthesis. Catalyzes the reductive methylation of 2'-deoxyuridine-5'-monophosphate (dUMP) to 2'-deoxythymidine-5'-monophosphate (dTMP) while utilizing 5,10-methylenetetrahydrofolate (mTHF) as the methyl donor and reductant in the reaction, yielding dihydrofolate (DHF) as a by-product. This enzymatic reaction provides an intracellular de novo source of dTMP, an essential precursor for DNA biosynthesis. In Yersinia pseudotuberculosis serotype O:1b (strain IP 31758), this protein is Thymidylate synthase.